The following is a 410-amino-acid chain: Kynureninase (410 aa).

Pyridoxal 5'-phosphate is bound by residues Thr108, Ser109, 135–138 (FPTD), Thr176, Asp205, His208, and Tyr230. Lys231 bears the N6-(pyridoxal phosphate)lysine mark. The pyridoxal 5'-phosphate site is built by Trp260 and Thr286.

Belongs to the kynureninase family. Homodimer. Pyridoxal 5'-phosphate is required as a cofactor.

It catalyses the reaction L-kynurenine + H2O = anthranilate + L-alanine + H(+). The enzyme catalyses 3-hydroxy-L-kynurenine + H2O = 3-hydroxyanthranilate + L-alanine + H(+). Its pathway is amino-acid degradation; L-kynurenine degradation; L-alanine and anthranilate from L-kynurenine: step 1/1. It participates in cofactor biosynthesis; NAD(+) biosynthesis; quinolinate from L-kynurenine: step 2/3. Its function is as follows. Catalyzes the cleavage of L-kynurenine (L-Kyn) and L-3-hydroxykynurenine (L-3OHKyn) into anthranilic acid (AA) and 3-hydroxyanthranilic acid (3-OHAA), respectively. This is Kynureninase from Deinococcus radiodurans (strain ATCC 13939 / DSM 20539 / JCM 16871 / CCUG 27074 / LMG 4051 / NBRC 15346 / NCIMB 9279 / VKM B-1422 / R1).